We begin with the raw amino-acid sequence, 450 residues long: Probable malate:quinone oxidoreductase (450 aa).

Belongs to the MQO family. Requires FAD as cofactor.

It catalyses the reaction (S)-malate + a quinone = a quinol + oxaloacetate. It functions in the pathway carbohydrate metabolism; tricarboxylic acid cycle; oxaloacetate from (S)-malate (quinone route): step 1/1. This chain is Probable malate:quinone oxidoreductase, found in Helicobacter acinonychis (strain Sheeba).